We begin with the raw amino-acid sequence, 726 residues long: Dipeptidyl-peptidase 5 (726 aa).

The N-terminal stretch at 1-19 (MAAAKWLIASLAFASSGLA) is a signal peptide. 2 N-linked (GlcNAc...) asparagine glycosylation sites follow: Asn-96 and Asn-252. The interval 269–291 (AEPINKRNGPRTPQGIEGASSSP) is disordered. The active-site Charge relay system is the Ser-558. N-linked (GlcNAc...) asparagine glycans are attached at residues Asn-605 and Asn-638. Active-site charge relay system residues include Asp-641 and His-673. Residue Asn-699 is glycosylated (N-linked (GlcNAc...) asparagine).

Belongs to the peptidase S9C family.

The protein resides in the secreted. This Trichophyton schoenleinii protein is Dipeptidyl-peptidase 5 (DPPV).